The chain runs to 255 residues: MAVISMKQLLEAGVHFGHQTRRWNPKMKKYIFTERNGIYIIDLQKTVKKVDEAYNFLKQVSEDGGQVLFVGTKKQAQESVKSEAERAGQFYINQRWLGGLLTNYKTISKRIKRISEIEKMEEDGLFEVLPKKEVVELKKEYDRLIKFLGGIRDMKSMPQALFVVDPRKERNAIAEARKLNIPIVGIVDTNCDPDEIDYVIPANDDAIRAVKLLTAKMADAILEGQQGVSNEEVAAEQNIDLDEKEKSEETEATEE.

The interval 226–255 (QGVSNEEVAAEQNIDLDEKEKSEETEATEE) is disordered.

This sequence belongs to the universal ribosomal protein uS2 family.

This Staphylococcus aureus (strain Mu3 / ATCC 700698) protein is Small ribosomal subunit protein uS2.